The primary structure comprises 180 residues: MASSVLSSAAVATRSNVAQANMVAPFTGLKSAASFPVSRKQNLDITSIASNGGRVQCMQVWPPINKKKYETLSYLPDLSQEQLLSEVEYLLKNGWVPCLEFETEHGFVYRENNKSPGYYDGRYWTMWKLPMFGCTDATQVLAEVEEAKKAYPQAWIRIIGFDNVRQVQCISFIAYKPEGY.

The transit peptide at 1 to 56 directs the protein to the chloroplast; sequence MASSVLSSAAVATRSNVAQANMVAPFTGLKSAASFPVSRKQNLDITSIASNGGRVQ.

The protein belongs to the RuBisCO small chain family. Heterohexadecamer of 8 large and 8 small subunits.

Its subcellular location is the plastid. It localises to the chloroplast. RuBisCO catalyzes two reactions: the carboxylation of D-ribulose 1,5-bisphosphate, the primary event in carbon dioxide fixation, as well as the oxidative fragmentation of the pentose substrate. Both reactions occur simultaneously and in competition at the same active site. Although the small subunit is not catalytic it is essential for maximal activity. This chain is Ribulose bisphosphate carboxylase small subunit, chloroplastic 1, found in Nicotiana sylvestris (Wood tobacco).